The following is a 177-amino-acid chain: Eggshell protein (177 aa).

The first 18 residues, 1–18, serve as a signal peptide directing secretion; the sequence is MKQSLTLVFLVAIGYATA. Tandem repeats lie at residues 25-41, 42-59, 60-75, 76-91, and 92-112. Residues 25 to 112 are 5 X approximate tandem repeats; the sequence is YSGGYGGGCY…GCSGGNCGGG (88 aa). The segment covering 149 to 166 has biased composition (gly residues); the sequence is GSGKGKGGGKGGKGGKGG. The segment at 149 to 177 is disordered; sequence GSGKGKGGGKGGKGGKGGTYKPSHYGGGY.

The polypeptide is Eggshell protein (Schistosoma mansoni (Blood fluke)).